The primary structure comprises 431 residues: Levansucrase LscB (431 aa).

Sucrose is bound by residues tryptophan 61, aspartate 62, alanine 148, arginine 218, and aspartate 219. Aspartate 62 serves as the catalytic Nucleophile. The active-site Proton donor/acceptor is the glutamate 303.

The protein belongs to the glycosyl hydrolase 68 family.

It is found in the secreted. It catalyses the reaction [6)-beta-D-fructofuranosyl-(2-&gt;](n) alpha-D-glucopyranoside + sucrose = [6)-beta-D-fructofuranosyl-(2-&gt;](n+1) alpha-D-glucopyranoside + D-glucose. Functionally, catalyzes the synthesis of levan, a fructose polymer, by transferring the fructosyl moiety from sucrose to a growing acceptor molecule. The chain is Levansucrase LscB from Pseudomonas savastanoi pv. glycinea (Pseudomonas syringae pv. glycinea).